The sequence spans 156 residues: Protein-export protein SecB (156 aa).

This sequence belongs to the SecB family. In terms of assembly, homotetramer, a dimer of dimers. One homotetramer interacts with 1 SecA dimer.

The protein localises to the cytoplasm. Functionally, one of the proteins required for the normal export of preproteins out of the cell cytoplasm. It is a molecular chaperone that binds to a subset of precursor proteins, maintaining them in a translocation-competent state. It also specifically binds to its receptor SecA. The sequence is that of Protein-export protein SecB from Paraburkholderia phymatum (strain DSM 17167 / CIP 108236 / LMG 21445 / STM815) (Burkholderia phymatum).